The chain runs to 503 residues: Efflux pump vrtL (503 aa).

A disordered region spans residues 1-59 (MSKLSDNHSSASEGEKEAGDLESGPTAISSEPSFDDADRDPNLITWDGPKDPENPKNWP). Residue asparagine 7 is glycosylated (N-linked (GlcNAc...) asparagine). 12 consecutive transmembrane segments (helical) span residues 68 to 88 (WTVS…APAM), 101 to 121 (IEIY…PIFF), 133 to 153 (LLQI…FATT), 162 to 182 (FLAG…ISDM), 194 to 214 (VYTL…GFIA), 221 to 241 (WVFW…FFWL), 295 to 315 (IVFC…LMFA), 329 to 349 (PGIG…GLFF), 377 to 397 (SLAV…WSIG), 401 to 421 (WIMP…CLQG), 432 to 454 (TYAA…GFPL), and 471 to 491 (LLAF…WHFG).

This sequence belongs to the major facilitator superfamily.

The protein localises to the membrane. Functionally, efflux pump; part of the gene cluster that mediates the biosynthesis of viridicatumtoxin, a tetracycline-like fungal meroterpenoid with a unique, fused spirobicyclic ring system. This Penicillium aethiopicum protein is Efflux pump vrtL.